Consider the following 845-residue polypeptide: MTESKNDTKSWAPKQIWIKDVLKKSGTELLDISKSPAKAVAVKKSPAKDSATTKMVYYSANQLLIKTEQSSQAQFCLQVPPPLTATTTSVGLGVPPSGGQQEHFELLQTPQQRQMQLQLQDQHQQEQQQFVSYQLAIQQHQKQQQQQQHESITNAAPTAAPSAQRIKTEPVGGFPASAAVVSQVRKPSASKPQFKCDQCGMTFGSKSAHTSHTKSHSKNQDLSLNGASGAGVAAPVSTAAIELNDAGLPVGIPKSPTIKPLANVAAGADPYQCNVCQKTFAVPARLIRHYRTHTGERPFECEFCHKLFSVKENLQVHRRIHTKERPYKCDVCGRAFEHSGKLHRHMRIHTGERPHKCSVCEKTFIQSGQLVIHMRTHTGEKPYKCPEPGCGKGFTCSKQLKVHSRTHTGEKPYHCDICFRDFGYNHVLKLHRVQHYGSKCYKCTICDETFKNKKEMEAHIKGHANEVPDDEAEAAAASAAASTSAGSSAGSPSLQGVSSNSESSNHSPPSSPPATKKPRQARQPRVSKTVAATLSIPTSSPLSPSSLSSTYSPSASSMASPPPTSAHYLPVQMEADALSRDSGVSSAQPAHSTYADEEPTDLSMQQVQGQLPESTVDYYQAPPSLLELQPQPAGLTINPALLEAASIARRHDDNDDQVQDEDVHAAAWQMMQLCRGHGSLPPTEQPAPSHQPQVPTLHVSDLAANYDDTHEATVLIEHFKRGDLARHGLHKGYAPVPKYESALPNPDVVRRVEAAIGLRSSTESPERSSSPESDSLMMADRNVMTLPLRKRKHYMNKGDDGQVDSEKASGDGTSAAGGAASVGAGDGPGSKVMRMSSVIQFAKAS.

Residues 141–164 (QKQQQQQQHESITNAAPTAAPSAQ) form a disordered region. 8 C2H2-type zinc fingers span residues 194 to 216 (FKCDQCGMTFGSKSAHTSHTKSH), 271 to 293 (YQCNVCQKTFAVPARLIRHYRTH), 299 to 321 (FECEFCHKLFSVKENLQVHRRIH), 327 to 349 (YKCDVCGRAFEHSGKLHRHMRIH), 355 to 377 (HKCSVCEKTFIQSGQLVIHMRTH), 383 to 407 (YKCPEPGCGKGFTCSKQLKVHSRTH), 413 to 435 (YHCDICFRDFGYNHVLKLHRVQH), and 441 to 463 (YKCTICDETFKNKKEMEAHIKGH). 2 disordered regions span residues 469–610 (DDEA…VQGQ) and 757–845 (GLRS…AKAS). Low complexity-rich tracts occupy residues 474 to 491 (AAAASAAASTSAGSSAGS), 498 to 508 (SSNSESSNHSP), and 532 to 559 (ATLSIPTSSPLSPSSLSSTYSPSASSMA). A compositionally biased stretch (polar residues) spans 582–591 (SGVSSAQPAH). Low complexity predominate over residues 759-775 (RSSTESPERSSSPESDS). The segment covering 796–809 (NKGDDGQVDSEKAS) has biased composition (basic and acidic residues). Residues 810-823 (GDGTSAAGGAASVG) are compositionally biased toward low complexity.

It belongs to the krueppel C2H2-type zinc-finger protein family.

In terms of biological role, plays a general role in the hierarchies of gene expression leading to metamorphosis. In Drosophila melanogaster (Fruit fly), this protein is Krueppel homolog 1 (Kr-h1).